A 115-amino-acid chain; its full sequence is NADH-ubiquinone oxidoreductase chain 3 (115 aa).

3 helical membrane-spanning segments follow: residues 4 to 24 (LTALLINITLSLCLITIAFWL), 55 to 75 (FFLVAITFLLFDLEIALLLPL), and 86 to 106 (VMMLTSFILVSVLALGLAYEW).

It belongs to the complex I subunit 3 family. As to quaternary structure, core subunit of respiratory chain NADH dehydrogenase (Complex I) which is composed of 45 different subunits. Interacts with TMEM186. Interacts with TMEM242.

Its subcellular location is the mitochondrion inner membrane. It catalyses the reaction a ubiquinone + NADH + 5 H(+)(in) = a ubiquinol + NAD(+) + 4 H(+)(out). Core subunit of the mitochondrial membrane respiratory chain NADH dehydrogenase (Complex I) which catalyzes electron transfer from NADH through the respiratory chain, using ubiquinone as an electron acceptor. Essential for the catalytic activity of complex I. The polypeptide is NADH-ubiquinone oxidoreductase chain 3 (Isthmomys pirrensis (Mount Pirri Isthmus rat)).